The following is a 463-amino-acid chain: Fumarate hydratase class II (463 aa).

Residues 95-97 (SGT), 126-129 (HPND), 136-138 (SSN), and Thr-184 contribute to the substrate site. The Proton donor/acceptor role is filled by His-185. Ser-315 is an active-site residue. Residues Ser-316 and 321 to 323 (KIN) contribute to the substrate site.

Belongs to the class-II fumarase/aspartase family. Fumarase subfamily. Homotetramer.

It localises to the cytoplasm. It carries out the reaction (S)-malate = fumarate + H2O. The protein operates within carbohydrate metabolism; tricarboxylic acid cycle; (S)-malate from fumarate: step 1/1. Involved in the TCA cycle. Catalyzes the stereospecific interconversion of fumarate to L-malate. This Chlamydia trachomatis serovar D (strain ATCC VR-885 / DSM 19411 / UW-3/Cx) protein is Fumarate hydratase class II.